A 358-amino-acid chain; its full sequence is Histidinol-phosphate aminotransferase (358 aa).

Lysine 218 is subject to N6-(pyridoxal phosphate)lysine.

This sequence belongs to the class-II pyridoxal-phosphate-dependent aminotransferase family. Histidinol-phosphate aminotransferase subfamily. Homodimer. Pyridoxal 5'-phosphate serves as cofactor.

It catalyses the reaction L-histidinol phosphate + 2-oxoglutarate = 3-(imidazol-4-yl)-2-oxopropyl phosphate + L-glutamate. It participates in amino-acid biosynthesis; L-histidine biosynthesis; L-histidine from 5-phospho-alpha-D-ribose 1-diphosphate: step 7/9. This is Histidinol-phosphate aminotransferase from Dehalococcoides mccartyi (strain CBDB1).